Reading from the N-terminus, the 402-residue chain is tRNA(Met) cytidine acetate ligase (402 aa).

ATP contacts are provided by residues 7–20, Gly-102, Asn-171, and Arg-196; that span reads ITEY…HELH.

The protein belongs to the TmcAL family.

Its subcellular location is the cytoplasm. It catalyses the reaction cytidine(34) in elongator tRNA(Met) + acetate + ATP = N(4)-acetylcytidine(34) in elongator tRNA(Met) + AMP + diphosphate. Functionally, catalyzes the formation of N(4)-acetylcytidine (ac(4)C) at the wobble position of elongator tRNA(Met), using acetate and ATP as substrates. First activates an acetate ion to form acetyladenylate (Ac-AMP) and then transfers the acetyl group to tRNA to form ac(4)C34. This is tRNA(Met) cytidine acetate ligase from Clostridium perfringens (strain SM101 / Type A).